The primary structure comprises 334 residues: Phosphoribosylformylglycinamidine cyclo-ligase (334 aa).

This sequence belongs to the AIR synthase family.

It localises to the cytoplasm. The catalysed reaction is 2-formamido-N(1)-(5-O-phospho-beta-D-ribosyl)acetamidine + ATP = 5-amino-1-(5-phospho-beta-D-ribosyl)imidazole + ADP + phosphate + H(+). It participates in purine metabolism; IMP biosynthesis via de novo pathway; 5-amino-1-(5-phospho-D-ribosyl)imidazole from N(2)-formyl-N(1)-(5-phospho-D-ribosyl)glycinamide: step 2/2. The chain is Phosphoribosylformylglycinamidine cyclo-ligase from Thermococcus gammatolerans (strain DSM 15229 / JCM 11827 / EJ3).